Reading from the N-terminus, the 396-residue chain is L-tyrosine/L-aspartate decarboxylase (396 aa).

K245 carries the post-translational modification N6-(pyridoxal phosphate)lysine.

Belongs to the group II decarboxylase family. MfnA subfamily. In terms of assembly, homodimer. It depends on pyridoxal 5'-phosphate as a cofactor.

It carries out the reaction L-tyrosine + H(+) = tyramine + CO2. The catalysed reaction is L-aspartate + H(+) = beta-alanine + CO2. The protein operates within cofactor biosynthesis; methanofuran biosynthesis. It functions in the pathway cofactor biosynthesis; coenzyme A biosynthesis. Inhibited by hydroxylamine and O-methylhydroxylamine. Its function is as follows. Catalyzes the decarboxylation of L-tyrosine to produce tyramine for methanofuran biosynthesis. Can also catalyze the decarboxylation of L-aspartate to produce beta-alanine for coenzyme A (CoA) biosynthesis. This chain is L-tyrosine/L-aspartate decarboxylase, found in Methanocaldococcus jannaschii (strain ATCC 43067 / DSM 2661 / JAL-1 / JCM 10045 / NBRC 100440) (Methanococcus jannaschii).